Reading from the N-terminus, the 1024-residue chain is Importin-8 (1024 aa).

An Importin N-terminal domain is found at Ala-22–Arg-102. The interval Phe-896–Gly-969 is disordered. Composition is skewed to acidic residues over residues Ser-902–Val-917 and Asp-934–Leu-952.

Belongs to the importin beta family.

It is found in the cytoplasm. Its subcellular location is the nucleus. Its function is as follows. Involved in nuclear protein import, either by acting as autonomous nuclear transport receptor or as an adapter-like protein in association with the importin-beta subunit KPNB1. Acting autonomously, may serve as receptor for nuclear localization signals (NLS) and promote translocation of import substrates through the nuclear pore complex (NPC) by an energy requiring, Ran-dependent mechanism. At the nucleoplasmic side of the NPC, Ran binds to importin, the importin/substrate complex dissociates and importin is re-exported from the nucleus to the cytoplasm where GTP hydrolysis releases Ran. The directionality of nuclear import is thought to be conferred by an asymmetric distribution of the GTP- and GDP-bound forms of Ran between the cytoplasm and nucleus. In vitro mediates the nuclear import of the signal recognition particle protein SRP19. May also be involved in cytoplasm-to-nucleus shuttling of a broad spectrum of other cargos, including Argonaute-microRNAs complexes, the JUN protein, RELA/NF-kappa-B p65 subunit, the translation initiation factor EIF4E and a set of receptor-activated mothers against decapentaplegic homolog (SMAD) transcription factors that play a critical role downstream of the large family of transforming growth factor beta and bone morphogenetic protein (BMP) cytokines. This chain is Importin-8 (ipo8), found in Danio rerio (Zebrafish).